Here is a 247-residue protein sequence, read N- to C-terminus: Adenosylcobinamide-GDP ribazoletransferase (247 aa).

A run of 5 helical transmembrane segments spans residues 34–54 (IITF…VFMV), 59–79 (CGAP…TGGF), 113–133 (GGLA…ELAL), 138–158 (ILAS…LLMY), and 194–214 (VLLP…AIFI).

It belongs to the CobS family. Requires Mg(2+) as cofactor.

The protein resides in the cell inner membrane. The catalysed reaction is alpha-ribazole + adenosylcob(III)inamide-GDP = adenosylcob(III)alamin + GMP + H(+). The enzyme catalyses alpha-ribazole 5'-phosphate + adenosylcob(III)inamide-GDP = adenosylcob(III)alamin 5'-phosphate + GMP + H(+). Its pathway is cofactor biosynthesis; adenosylcobalamin biosynthesis; adenosylcobalamin from cob(II)yrinate a,c-diamide: step 7/7. Joins adenosylcobinamide-GDP and alpha-ribazole to generate adenosylcobalamin (Ado-cobalamin). Also synthesizes adenosylcobalamin 5'-phosphate from adenosylcobinamide-GDP and alpha-ribazole 5'-phosphate. The sequence is that of Adenosylcobinamide-GDP ribazoletransferase from Escherichia coli O45:K1 (strain S88 / ExPEC).